A 305-amino-acid chain; its full sequence is tRNA pseudouridine synthase B (305 aa).

Catalysis depends on Asp50, which acts as the Nucleophile.

This sequence belongs to the pseudouridine synthase TruB family. Type 1 subfamily.

The enzyme catalyses uridine(55) in tRNA = pseudouridine(55) in tRNA. Functionally, responsible for synthesis of pseudouridine from uracil-55 in the psi GC loop of transfer RNAs. This chain is tRNA pseudouridine synthase B, found in Rhodococcus jostii (strain RHA1).